Here is a 405-residue protein sequence, read N- to C-terminus: CLIP domain-containing serine protease B8 (405 aa).

The N-terminal stretch at 1 to 24 is a signal peptide; the sequence is MSSAVLLLLVCGCALAVLSPVAYG. Disulfide bonds link Cys-41/Cys-94, Cys-52/Cys-84, and Cys-58/Cys-95. Residues 41-95 form the Clip domain; the sequence is CDIPNEPNPGQCMLPAECVAYGKINDVSSLSSIERFSFIKQIQCNGSDTVPYVCC. Residues Asn-85 and Asn-108 are each glycosylated (N-linked (GlcNAc...) asparagine). In terms of domain architecture, Peptidase S1 spans 137–404; it reads IRGGQLAEID…YLPWIKMYTG (268 aa). Cys-167 and Cys-183 are joined by a disulfide. Active-site charge relay system residues include His-182 and Asp-249. Disulfide bonds link Cys-322/Cys-339 and Cys-349/Cys-380. The active-site Charge relay system is Ser-353.

Belongs to the peptidase S1 family. CLIP subfamily. Proteolytic cleavage is necessary for activation. Cleaved and activated by CLIPB4.

The protein resides in the secreted. Its function is as follows. Serine protease that functions in the melanization-mediated immune response. Preferentially, cleaves substrates with an arginine at the P1 site. May be involved in the activation of the prophenoloxidase cascade upstream of CLIPB9; does not cleave prophenoloxidase. The chain is CLIP domain-containing serine protease B8 from Anopheles gambiae (African malaria mosquito).